We begin with the raw amino-acid sequence, 339 residues long: tRNA N6-adenosine threonylcarbamoyltransferase (339 aa).

Fe cation contacts are provided by H111 and H115. Residues 134 to 138, D167, G180, and N272 contribute to the substrate site; that span reads LVSGG. Fe cation is bound at residue D300.

The protein belongs to the KAE1 / TsaD family. Fe(2+) serves as cofactor.

It is found in the cytoplasm. It catalyses the reaction L-threonylcarbamoyladenylate + adenosine(37) in tRNA = N(6)-L-threonylcarbamoyladenosine(37) in tRNA + AMP + H(+). Its function is as follows. Required for the formation of a threonylcarbamoyl group on adenosine at position 37 (t(6)A37) in tRNAs that read codons beginning with adenine. Is involved in the transfer of the threonylcarbamoyl moiety of threonylcarbamoyl-AMP (TC-AMP) to the N6 group of A37, together with TsaE and TsaB. TsaD likely plays a direct catalytic role in this reaction. The polypeptide is tRNA N6-adenosine threonylcarbamoyltransferase (Vibrio cholerae serotype O1 (strain ATCC 39541 / Classical Ogawa 395 / O395)).